Here is a 558-residue protein sequence, read N- to C-terminus: MSLTAALWVAVFGKCGPPPDLPYALPASEMNQTDFESHTTLRYNCRPGYSRASSSQSLYCKPLGKWQINIACVKKSCRNPGDLQNGKVEVKTDFLFGSQIEFSCSEGYILIGSSTSYCEIQGKGVSWSDPLPECVIAKCGMPPDISNGKHNGREEEFFTYRSSVTYKCDPDFTLLGNASITCTVVNKTVGVWSPSPPTCERIICPWPKVLHGTINSGFKHTYKYKDSVRFVCQKGFVLRGSGVIHCEADGSWSPVPVCELNSCTDIPDIPNAALITSPRPRKEDVYPVGTVLRYICRPGYEPATRQPMTVICQKDLSWSMLRGCKEICCPVPDPKSVRVIQHEKAHPDNDCTYFFGDEVSYTCQNDIMLTATCKSDGTWHPRTPSCHQSCDFPPAIAHGRYTKSSSYYVRTQVTYECEEGYRLVGEATISCWYSQWTPAAPQCKALCRKPEIGNGVLSTNKDQYVETENVTIQCDSGFVMLGSQSITCSENGTWYPKVSRCEQEVPKDCEHVFAGKKLMQCLPNSNDVKMALEVYKLTLEIKQLQLQIDKAKHVDREL.

Positions 1–13 (MSLTAALWVAVFG) are cleaved as a signal peptide. 8 consecutive Sushi domains span residues 14-74 (KCGP…ACVK), 75-136 (KSCR…ECVI), 137-201 (AKCG…TCER), 202-260 (IICP…VCEL), 261-326 (NSCT…GCKE), 327-388 (ICCP…SCHQ), 389-445 (SCDF…QCKA), and 446-503 (LCRK…RCEQ). Intrachain disulfides connect Cys-15/Cys-60, Cys-45/Cys-72, Cys-77/Cys-118, Cys-104/Cys-134, Cys-139/Cys-182, Cys-168/Cys-199, Cys-204/Cys-246, Cys-232/Cys-258, Cys-263/Cys-312, Cys-296/Cys-324, Cys-329/Cys-373, Cys-363/Cys-386, Cys-390/Cys-431, Cys-417/Cys-443, Cys-447/Cys-488, and Cys-474/Cys-501. An N-linked (GlcNAc...) asparagine glycan is attached at Asn-31. Residues Asn-177 and Asn-186 are each glycosylated (N-linked (GlcNAc...) asparagine). N-linked (GlcNAc...) asparagine glycans are attached at residues Asn-469 and Asn-491.

As to quaternary structure, disulfide-linked complex of alpha and beta chains.

The protein localises to the secreted. Controls the classical pathway of complement activation. It binds as a cofactor to C3b/C4b inactivator (C3bINA), which then hydrolyzes the complement fragment C4b. It also accelerates the degradation of the C4bC2a complex (C3 convertase) by dissociating the complement fragment C2a. Alpha chain binds C4b. It also interacts with anticoagulant protein S and with serum amyloid P component. This chain is C4b-binding protein alpha chain (C4bpa), found in Rattus norvegicus (Rat).